A 442-amino-acid chain; its full sequence is Probable serine/threonine-protein kinase PBL17 (442 aa).

G2 is lipidated: N-myristoyl glycine. The S-palmitoyl cysteine moiety is linked to residue C4. Position 79 is a phosphothreonine (T79). One can recognise a Protein kinase domain in the interval 90–370 (FRPDYILGEG…NHVVEVLETL (281 aa)). Residues 96 to 104 (LGEGGFGVV) and K125 each bind ATP. Residue Y170 is modified to Phosphotyrosine. The active-site Proton acceptor is the D220. Phosphoserine is present on S254. A phosphothreonine mark is found at T255 and T260. Y268 carries the post-translational modification Phosphotyrosine. The disordered stretch occupies residues 385–442 (HSRGKSVTLYEASSDSQGTRDGNGQRRRRPESGRSKSEAAVDTEKYVSTLSEPDTTKI). Residues 395-406 (EASSDSQGTRDG) show a composition bias toward polar residues. The segment covering 414–429 (PESGRSKSEAAVDTEK) has biased composition (basic and acidic residues). Residues 430–442 (YVSTLSEPDTTKI) show a composition bias toward polar residues.

Belongs to the protein kinase superfamily. Ser/Thr protein kinase family.

It is found in the cell membrane. The enzyme catalyses L-seryl-[protein] + ATP = O-phospho-L-seryl-[protein] + ADP + H(+). The catalysed reaction is L-threonyl-[protein] + ATP = O-phospho-L-threonyl-[protein] + ADP + H(+). Its function is as follows. May be involved in plant defense signaling. In Arabidopsis thaliana (Mouse-ear cress), this protein is Probable serine/threonine-protein kinase PBL17.